We begin with the raw amino-acid sequence, 554 residues long: Chaperonin GroEL (554 aa).

ATP is bound by residues 30–33 (TLGP), lysine 51, 87–91 (DGTTT), glycine 415, 478–480 (DAA), and aspartate 494.

The protein belongs to the chaperonin (HSP60) family. As to quaternary structure, forms a cylinder of 14 subunits composed of two heptameric rings stacked back-to-back. Interacts with the co-chaperonin GroES.

The protein resides in the cytoplasm. It catalyses the reaction ATP + H2O + a folded polypeptide = ADP + phosphate + an unfolded polypeptide.. Its function is as follows. Together with its co-chaperonin GroES, plays an essential role in assisting protein folding. The GroEL-GroES system forms a nano-cage that allows encapsulation of the non-native substrate proteins and provides a physical environment optimized to promote and accelerate protein folding. This Pelobacter propionicus (strain DSM 2379 / NBRC 103807 / OttBd1) protein is Chaperonin GroEL.